The following is a 280-amino-acid chain: 4-diphosphocytidyl-2-C-methyl-D-erythritol kinase (280 aa).

Lys-8 is an active-site residue. 91 to 101 (PVAAGLAGGSA) is an ATP binding site. Asp-133 is a catalytic residue.

The protein belongs to the GHMP kinase family. IspE subfamily.

It catalyses the reaction 4-CDP-2-C-methyl-D-erythritol + ATP = 4-CDP-2-C-methyl-D-erythritol 2-phosphate + ADP + H(+). Its pathway is isoprenoid biosynthesis; isopentenyl diphosphate biosynthesis via DXP pathway; isopentenyl diphosphate from 1-deoxy-D-xylulose 5-phosphate: step 3/6. In terms of biological role, catalyzes the phosphorylation of the position 2 hydroxy group of 4-diphosphocytidyl-2C-methyl-D-erythritol. In Clostridium acetobutylicum (strain ATCC 824 / DSM 792 / JCM 1419 / IAM 19013 / LMG 5710 / NBRC 13948 / NRRL B-527 / VKM B-1787 / 2291 / W), this protein is 4-diphosphocytidyl-2-C-methyl-D-erythritol kinase.